The primary structure comprises 500 residues: Probable cytosol aminopeptidase (500 aa).

K265 and D270 together coordinate Mn(2+). The active site involves K277. Mn(2+)-binding residues include D288, D347, and E349. Residue R351 is part of the active site.

Belongs to the peptidase M17 family. Requires Mn(2+) as cofactor.

The protein resides in the cytoplasm. It catalyses the reaction Release of an N-terminal amino acid, Xaa-|-Yaa-, in which Xaa is preferably Leu, but may be other amino acids including Pro although not Arg or Lys, and Yaa may be Pro. Amino acid amides and methyl esters are also readily hydrolyzed, but rates on arylamides are exceedingly low.. The enzyme catalyses Release of an N-terminal amino acid, preferentially leucine, but not glutamic or aspartic acids.. In terms of biological role, presumably involved in the processing and regular turnover of intracellular proteins. Catalyzes the removal of unsubstituted N-terminal amino acids from various peptides. This chain is Probable cytosol aminopeptidase, found in Rickettsia massiliae (strain Mtu5).